The chain runs to 524 residues: Alkaline phosphatase, tissue-nonspecific isozyme (524 aa).

The N-terminal stretch at 1-17 is a signal peptide; sequence MISPFLVLAIGTCLTNS. Asp-60 contributes to the Mg(2+) binding site. Residues Asp-60 and Ser-110 each coordinate Zn(2+). Ser-110 acts as the Phosphoserine intermediate in catalysis. Position 110 is a phosphoserine (Ser-110). Cysteines 139 and 201 form a disulfide. A glycan (N-linked (GlcNAc...) asparagine) is linked at Asn-140. Position 173 (Thr-173) interacts with Mg(2+). Asn-230 carries N-linked (GlcNAc...) asparagine glycosylation. Glu-235 serves as a coordination point for Ca(2+). Asn-271 is a glycosylation site (N-linked (GlcNAc...) asparagine). Ca(2+) contacts are provided by Phe-290 and Glu-291. Residue Asn-303 is glycosylated (N-linked (GlcNAc...) asparagine). Residue Asp-306 participates in Ca(2+) binding. Mg(2+) is bound at residue Glu-332. Zn(2+)-binding residues include Asp-337, His-341, Asp-378, and His-379. N-linked (GlcNAc...) asparagine glycosylation is present at Asn-430. His-454 lines the Zn(2+) pocket. A disulfide bond links Cys-489 and Cys-497. The GPI-anchor amidated glycine moiety is linked to residue Gly-501. Positions 502-524 are cleaved as a propeptide — removed in mature form; that stretch reads SGSAPSPGALLLPLAVLSLRTLF.

Belongs to the alkaline phosphatase family. In terms of assembly, homodimer. Requires Mg(2+) as cofactor. Zn(2+) is required as a cofactor. Ca(2+) serves as cofactor. Post-translationally, N-glycosylated. In terms of tissue distribution, widely expressed. Expressed in DRG neurons and spinal cord neurons.

The protein resides in the cell membrane. The protein localises to the extracellular vesicle membrane. Its subcellular location is the mitochondrion membrane. It localises to the mitochondrion intermembrane space. The catalysed reaction is a phosphate monoester + H2O = an alcohol + phosphate. It catalyses the reaction diphosphate + H2O = 2 phosphate + H(+). It carries out the reaction pyridoxal 5'-phosphate + H2O = pyridoxal + phosphate. The enzyme catalyses phosphoethanolamine + H2O = ethanolamine + phosphate. The catalysed reaction is N-phosphocreatine + H2O = creatine + phosphate. It catalyses the reaction ATP + H2O = ADP + phosphate + H(+). It carries out the reaction ADP + H2O = AMP + phosphate + H(+). The enzyme catalyses AMP + H2O = adenosine + phosphate. With respect to regulation, phosphatase activity is specifically inhibited by 5-((5-chloro-2-methoxyphenyl)sulfonamido)nicotinamide (SBI-425). Functionally, alkaline phosphatase that metabolizes various phosphate compounds and plays a key role in skeletal mineralization and adaptive thermogenesis. Has broad substrate specificity and can hydrolyze a considerable variety of compounds: however, only a few substrates, such as diphosphate (inorganic pyrophosphate; PPi), pyridoxal 5'-phosphate (PLP) and N-phosphocreatine are natural substrates. Plays an essential role in skeletal and dental mineralization via its ability to hydrolyze extracellular diphosphate, a potent mineralization inhibitor, to phosphate: it thereby promotes hydroxyapatite crystal formation and increases inorganic phosphate concentration. Acts in a non-redundant manner with PHOSPHO1 in skeletal mineralization: while PHOSPHO1 mediates the initiation of hydroxyapatite crystallization in the matrix vesicles (MVs), ALPL/TNAP catalyzes the spread of hydroxyapatite crystallization in the extracellular matrix. Also promotes dephosphorylation of osteopontin (SSP1), an inhibitor of hydroxyapatite crystallization in its phosphorylated state; it is however unclear whether ALPL/TNAP mediates SSP1 dephosphorylation via a direct or indirect manner. Catalyzes dephosphorylation of PLP to pyridoxal (PL), the transportable form of vitamin B6, in order to provide a sufficient amount of PLP in the brain, an essential cofactor for enzymes catalyzing the synthesis of diverse neurotransmitters. Additionally, also able to mediate ATP degradation in a stepwise manner to adenosine, thereby regulating the availability of ligands for purinergic receptors. Also capable of dephosphorylating microbial products, such as lipopolysaccharides (LPS) as well as other phosphorylated small-molecules, such as poly-inosine:cytosine (poly I:C). Acts as a key regulator of adaptive thermogenesis as part of the futile creatine cycle: localizes to the mitochondria of thermogenic fat cells and acts by mediating hydrolysis of N-phosphocreatine to initiate a futile cycle of creatine dephosphorylation and phosphorylation. During the futile creatine cycle, creatine and N-phosphocreatine are in a futile cycle, which dissipates the high energy charge of N-phosphocreatine as heat without performing any mechanical or chemical work. This Mus musculus (Mouse) protein is Alkaline phosphatase, tissue-nonspecific isozyme.